The primary structure comprises 832 residues: Regulator of drug sensitivity 1 (832 aa).

A DNA-binding region (zn(2)-C6 fungal-type) is located at residues C15–C42.

It localises to the nucleus. Its function is as follows. Zinc cluster transcription factor involved in resistance to cycloheximide. The chain is Regulator of drug sensitivity 1 (RDS1) from Saccharomyces cerevisiae (strain ATCC 204508 / S288c) (Baker's yeast).